Consider the following 564-residue polypeptide: Keratin, type II cytoskeletal 6C (564 aa).

Low complexity predominate over residues 1–11; that stretch reads MASTSTTIRSH. Residues 1–23 are disordered; it reads MASTSTTIRSHSSSRRGFSANSA. Alanine 2 carries the post-translational modification N-acetylalanine. The head stretch occupies residues 2–162; that stretch reads ASTSTTIRSH…DPAIQRVRAE (161 aa). Phosphoserine is present on serine 60. A coil 1A region spans residues 163–198; sequence EREQIKTLNNKFASFIDKVRFLEQQNKVLDTKWTLL. In terms of domain architecture, IF rod spans 163 to 476; that stretch reads EREQIKTLNN…KLLEGEECRL (314 aa). Residues 199–217 form a linker 1 region; that stretch reads QEQGTKTVRQNLEPLFEQY. A coil 1B region spans residues 218–309; the sequence is INNLRRQLDS…ALYDAELSQM (92 aa). Positions 310–333 are linker 12; it reads QTHISDTSVVLSMDNNRNLDLDSI. A coil 2 region spans residues 334–472; sequence IAEVKAQYEE…ATYRKLLEGE (139 aa). Positions 473–564 are tail; it reads ECRLNGEGVG…SSSSRKSYKH (92 aa).

This sequence belongs to the intermediate filament family. Heterodimer of a type I and a type II keratin. KRT6 isomers associate with KRT16 and/or KRT17. In terms of tissue distribution, constitutively expressed in distinct types of epithelia such as those in oral mucosa, esophagus, papillae of tongue and hair follicle outer root sheath.

The sequence is that of Keratin, type II cytoskeletal 6C (KRT6C) from Homo sapiens (Human).